The chain runs to 633 residues: Carbon monoxide dehydrogenase 2 (633 aa).

Residues cysteine 44, cysteine 53, cysteine 56, cysteine 61, and cysteine 73 each contribute to the [4Fe-4S] cluster site. Residues histidine 264, cysteine 343, cysteine 453, cysteine 484, and cysteine 525 each coordinate [Ni-4Fe-5S] cluster.

Belongs to the Ni-containing carbon monoxide dehydrogenase family. In terms of assembly, homodimer. [4Fe-4S] cluster serves as cofactor. The cofactor is [Ni-4Fe-5S] cluster.

It carries out the reaction CO + 2 oxidized [2Fe-2S]-[ferredoxin] + H2O = 2 reduced [2Fe-2S]-[ferredoxin] + CO2 + 2 H(+). CODH oxidizes carbon monoxide coupled, via CooF, to the reduction of a hydrogen cation by a hydrogenase (possibly CooH). The sequence is that of Carbon monoxide dehydrogenase 2 (cooS2) from Methanosarcina acetivorans (strain ATCC 35395 / DSM 2834 / JCM 12185 / C2A).